The primary structure comprises 367 residues: GMP synthase [glutamine-hydrolyzing] subunit B (367 aa).

The GMPS ATP-PPase domain occupies 2 to 190 (FDPASFVEEI…LKLPKEISER (189 aa)). ATP is bound at residue 29-35 (SGGVDST).

As to quaternary structure, heterodimer composed of a glutamine amidotransferase subunit (A) and a GMP-binding subunit (B).

It catalyses the reaction XMP + L-glutamine + ATP + H2O = GMP + L-glutamate + AMP + diphosphate + 2 H(+). The protein operates within purine metabolism; GMP biosynthesis; GMP from XMP (L-Gln route): step 1/1. In terms of biological role, catalyzes the synthesis of GMP from XMP. In Saccharolobus solfataricus (strain ATCC 35092 / DSM 1617 / JCM 11322 / P2) (Sulfolobus solfataricus), this protein is GMP synthase [glutamine-hydrolyzing] subunit B (guaAB).